The following is a 647-amino-acid chain: Denticleless protein homolog (647 aa).

WD repeat units lie at residues 48 to 88 (AAAV…KQSS), 95 to 134 (AHDNAVFDIAWVPGTNCLVTASGDQTARLWDVITGDLLGT), 137 to 177 (GHQC…KDGF), 209 to 248 (DSQQGVTVVLFCDETKLISSGAVDGIIKMWDLRRNYTAYH), 264 to 303 (TRKLGYSGLSLDYTGSRLFSNCTDDNIYMFNISGLKTTPV), 308 to 349 (GHSN…QAPM), and 353 to 393 (GHSQ…EGEN). 2 consecutive short sequence motifs (DDB1-binding motif) follow at residues 167–170 (WDTR) and 238–241 (WDLR). Disordered regions lie at residues 410-487 (QSPN…SKSP) and 534-647 (KRSR…RTQD). Polar residues-rich tracts occupy residues 426–443 (PSKNPGSVRSVSLASPQP) and 471–486 (KMPSSLQQWISRSSKS). Residues 543 to 558 (LKKEDSFGLESEKRLG) show a composition bias toward basic and acidic residues. Low complexity predominate over residues 586–600 (KGSAQPKSPSSGSSQ).

It belongs to the WD repeat cdt2 family. As to quaternary structure, component of the DCX(DTL) E3 ubiquitin ligase complex, at least composed of cul4 (cul4a or cul4b), ddb1, dtl/cdt2 and rbx1.

It is found in the nucleus. The protein resides in the cytoplasm. The protein localises to the cytoskeleton. Its subcellular location is the microtubule organizing center. It localises to the centrosome. It is found in the chromosome. It functions in the pathway protein modification; protein ubiquitination. Functionally, substrate-specific adapter of a DCX (DDB1-CUL4-X-box) E3 ubiquitin-protein ligase complex required for cell cycle control, DNA damage response and translesion DNA synthesis. The DCX(DTL) complex, also named CRL4(CDT2) complex, mediates the polyubiquitination and subsequent degradation of CDT1, CDKN1A/p21(CIP1), KMT5A and SDE2. CDT1 degradation in response to DNA damage is necessary to ensure proper cell cycle regulation of DNA replication. CDKN1A/p21(CIP1) degradation during S phase or following UV irradiation is essential to control replication licensing. KMT5A degradation is also important for a proper regulation of mechanisms such as TGF-beta signaling, cell cycle progression, DNA repair and cell migration. Most substrates require their interaction with PCNA for their polyubiquitination: substrates interact with PCNA via their PIP-box, and those containing the 'K+4' motif in the PIP box, recruit the DCX(DTL) complex, leading to their degradation. In undamaged proliferating cells, the DCX(DTL) complex also promotes the 'Lys-164' monoubiquitination of PCNA, thereby being involved in PCNA-dependent translesion DNA synthesis. May play a role in the regulation of the circadian clock. This chain is Denticleless protein homolog (dtl), found in Danio rerio (Zebrafish).